The sequence spans 65 residues: Small ribosomal subunit protein eS17 (65 aa).

Belongs to the eukaryotic ribosomal protein eS17 family.

The chain is Small ribosomal subunit protein eS17 from Methanocella arvoryzae (strain DSM 22066 / NBRC 105507 / MRE50).